A 311-amino-acid polypeptide reads, in one-letter code: MKVAVIGAAGGIGQALALLLKNRLPAGSDLALYDIAPVTPGVAADLSHIPTPVTIKGYAGEDPTPALEGADVVLVSAGVARKPGMDRADLFNVNAGIVKALAEKIAVVCPKACVGIITNPVNTTVPIAAEVLKKAGVYDKRKLFGVTTLDVIRSETFVAALKDKDPGQVRVPVIGGHSGVTILPLLSQVEGVSFTDEEVAALTKRIQNAGTEVVEAKAGGGSATLSMGQAACRFGLALVKALQGESDVVEYAYVEGEGEYAPFFAQPIKLGKNGVEALLDIGKLSAYEQAALDGMLDTLKGDIQIGVEFVK.

NAD(+) is bound by residues 7–13 (GAAGGIG) and Asp34. Residues Arg81 and Arg87 each contribute to the substrate site. NAD(+) is bound by residues Asn94 and 117–119 (ITN). Residues Asn119 and Arg153 each contribute to the substrate site. His177 (proton acceptor) is an active-site residue. Met227 contributes to the NAD(+) binding site.

The protein belongs to the LDH/MDH superfamily. MDH type 1 family. In terms of assembly, homodimer.

It carries out the reaction (S)-malate + NAD(+) = oxaloacetate + NADH + H(+). Catalyzes the reversible oxidation of malate to oxaloacetate. This is Malate dehydrogenase (mdh) from Vibrio cholerae serotype O1 (strain ATCC 39315 / El Tor Inaba N16961).